The primary structure comprises 127 residues: MSKPFYVRFEVPPELAEKAYQALEIARKTGKIKKGTNETTKCVERGLAKLVLIAEDVDPPEIVAHLPLLCEEKKIPYVYVPSKKRLGEAAGIEVAAASACIIDPGEAKNLVEEIVKAVNELKTKAAQ.

It belongs to the eukaryotic ribosomal protein eL8 family. In terms of assembly, part of the 50S ribosomal subunit. Probably part of the RNase P complex.

It is found in the cytoplasm. In terms of biological role, multifunctional RNA-binding protein that recognizes the K-turn motif in ribosomal RNA, the RNA component of RNase P, box H/ACA, box C/D and box C'/D' sRNAs. The sequence is that of Large ribosomal subunit protein eL8 from Hyperthermus butylicus (strain DSM 5456 / JCM 9403 / PLM1-5).